A 333-amino-acid polypeptide reads, in one-letter code: Homeobox protein Nkx-3.2 (333 aa).

2 disordered regions span residues 74–121 and 137–212; these read PART…RARV and DLEE…SRAA. Residues 137–148 show a composition bias toward basic and acidic residues; that stretch reads DLEEEAPVRSDS. A compositionally biased stretch (gly residues) spans 179-191; the sequence is GAAGSGASGGQAG. A DNA-binding region (homeobox) is located at residues 206-265; that stretch reads KKRSRAAFSHAQVFELERRFNHQRYLSGPERADLAASLKLTETQVKIWFQNRRYKTKRRQ.

It belongs to the NK-3 homeobox family. Expressed widely in mesoderm at the gastroduodenal junction (at protein level). Expressed in visceral mesoderm and embryonic skeleton. Expression is restricted to immature proliferative chondrocytes during endochondral ossification.

Its subcellular location is the nucleus. In terms of biological role, transcriptional repressor that acts as a negative regulator of chondrocyte maturation. PLays a role in distal stomach development; required for proper antral-pyloric morphogenesis and development of antral-type epithelium. In concert with GSC, defines the structural components of the middle ear; required for tympanic ring and gonium development and in the regulation of the width of the malleus. The polypeptide is Homeobox protein Nkx-3.2 (Nkx3-2) (Mus musculus (Mouse)).